The primary structure comprises 327 residues: Biotin synthase (327 aa).

The 228-residue stretch at 52-279 (TKVQLSTLVS…ASYVRLSAGR (228 aa)) folds into the Radical SAM core domain. Cysteine 67, cysteine 71, and cysteine 74 together coordinate [4Fe-4S] cluster. Positions 111, 142, 202, and 274 each coordinate [2Fe-2S] cluster.

The protein belongs to the radical SAM superfamily. Biotin synthase family. As to quaternary structure, homodimer. Requires [4Fe-4S] cluster as cofactor. The cofactor is [2Fe-2S] cluster.

It catalyses the reaction (4R,5S)-dethiobiotin + (sulfur carrier)-SH + 2 reduced [2Fe-2S]-[ferredoxin] + 2 S-adenosyl-L-methionine = (sulfur carrier)-H + biotin + 2 5'-deoxyadenosine + 2 L-methionine + 2 oxidized [2Fe-2S]-[ferredoxin]. It participates in cofactor biosynthesis; biotin biosynthesis; biotin from 7,8-diaminononanoate: step 2/2. Its function is as follows. Catalyzes the conversion of dethiobiotin (DTB) to biotin by the insertion of a sulfur atom into dethiobiotin via a radical-based mechanism. The protein is Biotin synthase of Chromobacterium violaceum (strain ATCC 12472 / DSM 30191 / JCM 1249 / CCUG 213 / NBRC 12614 / NCIMB 9131 / NCTC 9757 / MK).